Consider the following 402-residue polypeptide: uncharacterized protein (402 aa).

Over 1–11 (MTPSNYQRTRW) the chain is Cytoplasmic. Residues 12–34 (LTLIGTIITQFALGSVYTWSLFN) traverse the membrane as a helical segment. Residues 35–43 (GALSAKLDA) lie on the Periplasmic side of the membrane. Residues 44-66 (PVSQVAFSFGLLSLGLAISSSVA) form a helical membrane-spanning segment. Over 67–72 (GKLQER) the chain is Cytoplasmic. Residues 73–95 (FGVKRVTMASGILLGLGFFLTAH) traverse the membrane as a helical segment. The Periplasmic segment spans residues 96–99 (SDNL). The chain crosses the membrane as a helical span at residues 100-122 (MMLWLSAGVLVGLADGAGYLLTL). Over 123-134 (SNCVKWFPERKG) the chain is Cytoplasmic. The helical transmembrane segment at 135-154 (LISAFAIGSYGLGSLGFKFI) threads the bilayer. Residues 155-168 (DTQLLETVGLEKTF) lie on the Periplasmic side of the membrane. Residues 169 to 186 (VIWGAIALLMIVFGATLM) form a helical membrane-spanning segment. The Cytoplasmic portion of the chain corresponds to 187–216 (KDAPKQEVKTSNGVVEKDYTLAESMRKPQY). A helical transmembrane segment spans residues 217 to 236 (WMLAVMFLTACMSGLYVIGV). Topologically, residues 237-250 (AKDIAQSLAHLDVV) are periplasmic. Residues 251–273 (SAANAVTVISIANLSGRLVLGIL) form a helical membrane-spanning segment. The Cytoplasmic portion of the chain corresponds to 274–279 (SDKIAR). A helical membrane pass occupies residues 280–302 (IRVITIGQVISLVGMAALLFAPL). The Periplasmic segment spans residues 303–306 (NAVT). A helical membrane pass occupies residues 307–329 (FFAAIACVAFNFGGTITVFPSLV). Over 330 to 341 (SEFFGLNNLAKN) the chain is Cytoplasmic. Residues 342–364 (YGVIYLGFGIGSICGSIIASLFG) form a helical membrane-spanning segment. Topologically, residues 365-367 (GFY) are periplasmic. The helical transmembrane segment at 368–387 (VTFYVIFALLILSLALSTTI) threads the bilayer. Residues 388–402 (RQPEQKMLREAHGSL) lie on the Cytoplasmic side of the membrane.

The protein belongs to the major facilitator superfamily. As to quaternary structure, interacts with BtsS and YpdA.

The protein localises to the cell inner membrane. Functionally, part of a nutrient-sensing regulatory network composed of the two-component regulatory systems BtsS/BtsR and YpdA/YpdB, and their respective target proteins, BtsT and YhjX. This is an uncharacterized protein from Escherichia coli (strain K12).